The primary structure comprises 130 residues: Sirohydrochlorin cobaltochelatase (130 aa).

Residue H12 is the Proton acceptor of the active site. Position 12 (H12) interacts with Co(2+). H12 is a binding site for Ni(2+). Substrate-binding positions include E48 and 73–78; that span reads LASGVH. H78 lines the Co(2+) pocket. Residue H78 participates in Ni(2+) binding.

The protein belongs to the CbiX family. CbiXS subfamily. Homotetramer; dimer of dimers.

It catalyses the reaction Co-sirohydrochlorin + 2 H(+) = sirohydrochlorin + Co(2+). The enzyme catalyses Ni-sirohydrochlorin + 2 H(+) = sirohydrochlorin + Ni(2+). It functions in the pathway cofactor biosynthesis; adenosylcobalamin biosynthesis; cob(II)yrinate a,c-diamide from sirohydrochlorin (anaerobic route): step 1/10. In terms of biological role, catalyzes the insertion of Co(2+) into sirohydrochlorin as part of the anaerobic pathway to cobalamin biosynthesis. Involved in the biosynthesis of the unique nickel-containing tetrapyrrole coenzyme F430, the prosthetic group of methyl-coenzyme M reductase (MCR), which plays a key role in methanogenesis and anaerobic methane oxidation. Catalyzes the insertion of Ni(2+) into sirohydrochlorin to yield Ni-sirohydrochlorin. The chain is Sirohydrochlorin cobaltochelatase from Methanosarcina barkeri (strain Fusaro / DSM 804).